The following is a 233-amino-acid chain: Transcriptional regulatory protein NatR (233 aa).

In terms of domain architecture, Response regulatory spans 3 to 117; sequence KVGLVDDYRV…RLAASFDRYL (115 aa). Asp54 carries the post-translational modification 4-aspartylphosphate. Residues 129-233 enclose the HTH LytTR-type domain; it reads ILIKQKSEMH…QLDYFQNYYF (105 aa).

In terms of processing, phosphorylated by NatK.

Its subcellular location is the cytoplasm. Member of the two-component regulatory system NatK/NatR that positively regulates the expression of the natAB operon. Acts by binding directly to the promoter of natAB. This is Transcriptional regulatory protein NatR from Bacillus subtilis (strain 168).